We begin with the raw amino-acid sequence, 53 residues long: 20 kDa chaperonin (53 aa).

2 cpn-10 domain regions span residues 1 to 10 (YTSIKPLGDR) and 11 to 53 (VAEA…KITP).

Belongs to the GroES chaperonin family. As to quaternary structure, forms stable complexes with cpn60 in the presence of ATP. Homotetramer.

Its subcellular location is the plastid. It is found in the chloroplast. Seems to function only as a co-chaperone, along with cpn60, and in certain cases is essential for the discharge of biologically active proteins from cpn60. This chain is 20 kDa chaperonin, found in Populus euphratica (Euphrates poplar).